We begin with the raw amino-acid sequence, 288 residues long: Bifunctional protein FolD 2 (288 aa).

Residues 166–168 (GRS) and Ser-191 contribute to the NADP(+) site.

This sequence belongs to the tetrahydrofolate dehydrogenase/cyclohydrolase family. Homodimer.

It carries out the reaction (6R)-5,10-methylene-5,6,7,8-tetrahydrofolate + NADP(+) = (6R)-5,10-methenyltetrahydrofolate + NADPH. The enzyme catalyses (6R)-5,10-methenyltetrahydrofolate + H2O = (6R)-10-formyltetrahydrofolate + H(+). Its pathway is one-carbon metabolism; tetrahydrofolate interconversion. Its function is as follows. Catalyzes the oxidation of 5,10-methylenetetrahydrofolate to 5,10-methenyltetrahydrofolate and then the hydrolysis of 5,10-methenyltetrahydrofolate to 10-formyltetrahydrofolate. This chain is Bifunctional protein FolD 2, found in Frankia casuarinae (strain DSM 45818 / CECT 9043 / HFP020203 / CcI3).